A 317-amino-acid polypeptide reads, in one-letter code: Olfactory receptor-like protein OLF3 (317 aa).

Topologically, residues 1-25 are extracellular; sequence MGTGNQTWVREFVLLGLSSDWDTEV. N-linked (GlcNAc...) asparagine glycosylation is present at Asn5. A helical transmembrane segment spans residues 26-49; the sequence is SLFVLFLITYMVTVLGNFLIILLI. Residues 50–57 lie on the Cytoplasmic side of the membrane; sequence RLDSRLHT. A helical transmembrane segment spans residues 58-79; the sequence is PMYFFLTNLSLVDVSYATSIIP. Residues 80–100 are Extracellular-facing; sequence QMLAHLLAAHKAIPFVSCAAQ. A helical transmembrane segment spans residues 101–120; sequence LFFSLGLGGIEFVLLAVMAY. Residues 121 to 139 lie on the Cytoplasmic side of the membrane; the sequence is DRYVAVCDPLRYSVIMHGG. The chain crosses the membrane as a helical span at residues 140–158; that stretch reads LCTRLAITSWVSGSMNSLM. At 159-196 the chain is on the extracellular side; that stretch reads QTVITFQLPMCTNKYIDHISCELLAVVRLACVDTSSNE. Residues 197 to 219 form a helical membrane-spanning segment; that stretch reads IAIMVSSIVLLMTPFCLVLLSYI. The Cytoplasmic portion of the chain corresponds to 220–236; sequence QIISTILKIQSTEGRKK. The helical transmembrane segment at 237-260 threads the bilayer; it reads AFHTCASHLTVVVLCYGMAIFTYI. The Extracellular segment spans residues 261-272; the sequence is QPRSSPSVLQEK. The helical transmembrane segment at 273–292 threads the bilayer; it reads LISLFYSVLTPMLNPMIYSV. Over 293–317 the chain is Cytoplasmic; that stretch reads RNKEVKGAWQKLLGQLTGITSKLAT.

Belongs to the G-protein coupled receptor 1 family.

It is found in the cell membrane. Its function is as follows. Putative odorant or sperm cell receptor. This chain is Olfactory receptor-like protein OLF3, found in Canis lupus familiaris (Dog).